The sequence spans 626 residues: Two-component response regulator ORR24 (626 aa).

A disordered region spans residues 1–22; it reads MTVEERQGRVGGHGVSGGGGGR. The span at 9–22 shows a compositional bias: gly residues; the sequence is RVGGHGVSGGGGGR. Residues 30-145 form the Response regulatory domain; sequence RVLAVDDDPT…QLRTIWQHVI (116 aa). D81 carries the 4-aspartylphosphate modification. Residues 151-162 are compositionally biased toward basic and acidic residues; the sequence is DAKNRGNDDDAG. Disordered stretches follow at residues 151–215 and 402–440; these read DAKN…KKPR and PLES…RTTN. The span at 191–202 shows a compositional bias: acidic residues; the sequence is NGDDGDDSDENS. Residues 210–269 constitute a DNA-binding region (myb-like GARP); sequence TQKKPRVVWSVELHRKFVAAVNQLGIEKAVPKKILDLMNVENITRENVASHLQKYRLYLK. Residues 402-421 show a composition bias toward polar residues; that stretch reads PLESSNQQHLSRVHSSSADP.

It belongs to the ARR family. Type-B subfamily. Post-translationally, two-component system major event consists of a His-to-Asp phosphorelay between a sensor histidine kinase (HK) and a response regulator (RR). In plants, the His-to-Asp phosphorelay involves an additional intermediate named Histidine-containing phosphotransfer protein (HPt). This multistep phosphorelay consists of a His-Asp-His-Asp sequential transfer of a phosphate group between first a His and an Asp of the HK protein, followed by the transfer to a conserved His of the HPt protein and finally the transfer to an Asp in the receiver domain of the RR protein.

The protein resides in the nucleus. Its function is as follows. Transcriptional activator that binds specific DNA sequence. Functions as a response regulator involved in His-to-Asp phosphorelay signal transduction system. Phosphorylation of the Asp residue in the receiver domain activates the ability of the protein to promote the transcription of target genes. May directly activate some type-A response regulators in response to cytokinins. This chain is Two-component response regulator ORR24, found in Oryza sativa subsp. japonica (Rice).